The sequence spans 423 residues: Guanine nucleotide-binding protein subunit beta (423 aa).

WD repeat units lie at residues 90-120 (GHNNKISDFRWSRDSKRILSASQDGFMLIWD), 132-162 (LDSQWVLSCAISPSSTLVASAGLNNNCTIYR), 179-208 (GHTCYISDIEFTDNAHILTASGDMTCALWD), 220-256 (DHLGDVLALAIPEEPNSENSSNTFASCGSDGYTYIWD), 268-298 (VNDSDINALRFFKDGMSIVAGSDNGAINMYD), 348-377 (DNQGVVSLDFSASGRLMYSCYTDIGCVVWD), and 389-419 (GHGGRVTGVRSSPDGLAVCTGSWDSTMKIWS).

Belongs to the WD repeat G protein beta family. As to quaternary structure, g proteins are composed of 3 units, alpha, beta and gamma. The beta-gamma subunit complex (STE4-STE18 complex) interacts with PLP1 and PLP2. Interacts with SYG1.

Its function is as follows. Implicated in the a- and alpha-factor response pathway. The beta and gamma chains of the putative yeast mating response pathway G protein play a positive role in initiation of the mating response. The beta and gamma chains are required for the GTPase activity, for replacement of GDP by GTP, and for G protein-effector interaction. The chain is Guanine nucleotide-binding protein subunit beta (STE4) from Saccharomyces cerevisiae (strain ATCC 204508 / S288c) (Baker's yeast).